The sequence spans 308 residues: MSSKHVAVLLGGFSSERPVSLSSGTACADALEGEGYRVTRVDVGHDVAAVLQELRPDVVFNALHGPFGEDGTIQGILEYLEIPYTHSGVLASALAMDKAQAKHVAKAAGIPVAEAVVMDRRSFGNQHPMKPPYVVKPVREGSSFGVVIVKEDQSHPPQVITSSDWRYGDRIMVERYVAGREFTCGVMGDVALGVTEIIPQGHAFYDYDSKYVKGGSKHVIPAQVSPNIYQKIQTLALKAHQAIGCRGVSRSDFRFDDRGDGEGELIWLEINTQPGMTPTSLVPEMAQHAGLRFGEFLRWMVEDASCLR.

The ATP-grasp domain occupies Lys102–Glu302. Residue Pro128–Thr183 participates in ATP binding. Residues Asp252, Glu269, and Asn271 each contribute to the Mg(2+) site.

This sequence belongs to the D-alanine--D-alanine ligase family. It depends on Mg(2+) as a cofactor. Mn(2+) serves as cofactor.

The protein resides in the cytoplasm. It catalyses the reaction 2 D-alanine + ATP = D-alanyl-D-alanine + ADP + phosphate + H(+). It functions in the pathway cell wall biogenesis; peptidoglycan biosynthesis. In terms of biological role, cell wall formation. The protein is D-alanine--D-alanine ligase of Sinorhizobium medicae (strain WSM419) (Ensifer medicae).